The sequence spans 196 residues: Alpha-crystallin A chain (196 aa).

At Met-1 the chain carries N-acetylmethionine. A required for complex formation with BFSP1 and BFSP2 region spans residues 1–63; sequence MDVTIQHPWF…RTVLDSGISE (63 aa). Gln-6 is subject to Deamidated glutamine; partial. Residue Ser-45 is modified to Phosphoserine. At Gln-50 the chain carries Deamidated glutamine; partial. The region spanning 76 to 185 is the sHSP domain; that stretch reads HAGNPKNNPV…GHSERAIPVS (110 aa). Residues Lys-93 and Lys-122 each carry the N6-acetyllysine modification. His-123 is a Zn(2+) binding site. Residue Asn-124 is modified to Deamidated asparagine; partial. The Zn(2+) site is built by Glu-125 and His-130. At Ser-145 the chain carries Phosphoserine. Asn-146 carries the deamidated asparagine; partial modification. The interval 168-196 is disordered; that stretch reads KVQSGLDAGHSERAIPVSREEKPSSAPSS. Deamidated glutamine; partial is present on Gln-170. Residues 176 to 190 show a composition bias toward basic and acidic residues; sequence GHSERAIPVSREEKP. His-177 serves as a coordination point for Zn(2+). A glycan (O-linked (GlcNAc) serine) is linked at Ser-185.

It belongs to the small heat shock protein (HSP20) family. In terms of assembly, heteropolymer composed of three CRYAA and one CRYAB subunits. Inter-subunit bridging via zinc ions enhances stability, which is crucial as there is no protein turn over in the lens. Can also form homodimers and homotetramers (dimers of dimers) which serve as the building blocks of homooligomers. Within homooligomers, the zinc-binding motif is created from residues of 3 different molecules. His-123 and Glu-125 from one molecule are ligands of the zinc ion, and His-130 and His-177 residues from additional molecules complete the site with tetrahedral coordination geometry. Part of a complex required for lens intermediate filament formation composed of BFSP1, BFSP2 and CRYAA. Post-translationally, acetylation at Lys-93 may increase chaperone activity. Undergoes age-dependent proteolytical cleavage at the C-terminus.

It localises to the cytoplasm. The protein resides in the nucleus. Contributes to the transparency and refractive index of the lens. Acts as a chaperone, preventing aggregation of various proteins under a wide range of stress conditions. Required for the correct formation of lens intermediate filaments as part of a complex composed of BFSP1, BFSP2 and CRYAA. In Mus musculus (Mouse), this protein is Alpha-crystallin A chain (Cryaa).